We begin with the raw amino-acid sequence, 432 residues long: Ribosomal protein uS12 methylthiotransferase RimO (432 aa).

An MTTase N-terminal domain is found at 1-112 (MKIGVVSLGC…ILNYLGLKEK (112 aa)). Cys10, Cys46, Cys75, Cys134, Cys138, and Cys141 together coordinate [4Fe-4S] cluster. Residues 120 to 350 (STPRSYAYLK…MAIQRGITRK (231 aa)) enclose the Radical SAM core domain. Residues 353 to 422 (EEFLGKEIEV…DYDLAGRDTE (70 aa)) form the TRAM domain.

The protein belongs to the methylthiotransferase family. RimO subfamily. [4Fe-4S] cluster serves as cofactor.

It is found in the cytoplasm. It catalyses the reaction L-aspartate(89)-[ribosomal protein uS12]-hydrogen + (sulfur carrier)-SH + AH2 + 2 S-adenosyl-L-methionine = 3-methylsulfanyl-L-aspartate(89)-[ribosomal protein uS12]-hydrogen + (sulfur carrier)-H + 5'-deoxyadenosine + L-methionine + A + S-adenosyl-L-homocysteine + 2 H(+). Its function is as follows. Catalyzes the methylthiolation of an aspartic acid residue of ribosomal protein uS12. The chain is Ribosomal protein uS12 methylthiotransferase RimO from Aquifex aeolicus (strain VF5).